The sequence spans 108 residues: Movement protein TGB2 (108 aa).

Residues 1-8 (MPLTPPPN) are Cytoplasmic-facing. The chain crosses the membrane as a helical span at residues 9–29 (YTGLYIAAALGVSLAAVVALF). Residues 30–72 (TRSTLPIVGDSQHNLPHGGRYRDGTKAIDYFKPTKLNSVEPGN) lie on the Lumenal side of the membrane. A helical transmembrane segment spans residues 73 to 93 (YWYTQPWLLVILLVALICLSG). The Cytoplasmic segment spans residues 94–108 (RHAQCCPRCNRVHSA).

The protein belongs to the Tymovirales TGBp2 protein family.

It is found in the host endoplasmic reticulum membrane. Plays a role in viral cell-to-cell propagation, by facilitating genome transport to neighboring plant cells through plasmosdesmata,. This is Movement protein TGB2 from Solanum tuberosum (Potato).